Reading from the N-terminus, the 208-residue chain is LexA repressor (208 aa).

Positions valine 30–alanine 50 form a DNA-binding region, H-T-H motif. Catalysis depends on for autocatalytic cleavage activity residues serine 129 and lysine 167.

The protein belongs to the peptidase S24 family. As to quaternary structure, homodimer.

The enzyme catalyses Hydrolysis of Ala-|-Gly bond in repressor LexA.. Its function is as follows. Represses a number of genes involved in the response to DNA damage (SOS response), including recA and lexA. In the presence of single-stranded DNA, RecA interacts with LexA causing an autocatalytic cleavage which disrupts the DNA-binding part of LexA, leading to derepression of the SOS regulon and eventually DNA repair. The chain is LexA repressor from Lactobacillus helveticus (strain DPC 4571).